The following is an 80-amino-acid chain: UPF0180 protein BPUM_1317 (80 aa).

Belongs to the UPF0180 family.

The chain is UPF0180 protein BPUM_1317 from Bacillus pumilus (strain SAFR-032).